The primary structure comprises 431 residues: ATP-dependent protease ATPase subunit HslU (431 aa).

Residues Val18, 60 to 65, Asp244, Glu309, and Arg381 contribute to the ATP site; that span reads GVGKTE.

It belongs to the ClpX chaperone family. HslU subfamily. A double ring-shaped homohexamer of HslV is capped on each side by a ring-shaped HslU homohexamer. The assembly of the HslU/HslV complex is dependent on binding of ATP.

It localises to the cytoplasm. Functionally, ATPase subunit of a proteasome-like degradation complex; this subunit has chaperone activity. The binding of ATP and its subsequent hydrolysis by HslU are essential for unfolding of protein substrates subsequently hydrolyzed by HslV. HslU recognizes the N-terminal part of its protein substrates and unfolds these before they are guided to HslV for hydrolysis. The polypeptide is ATP-dependent protease ATPase subunit HslU (Caulobacter sp. (strain K31)).